The chain runs to 88 residues: MPNIKSAIKRVKIARERTLKNASARSALRTTLKRFEAALASADVDNARAALAKAVRALDKAAAKGLIHKNTASRKKSRITKRFNKAVV.

Belongs to the bacterial ribosomal protein bS20 family.

Binds directly to 16S ribosomal RNA. This chain is Small ribosomal subunit protein bS20, found in Heliobacterium modesticaldum (strain ATCC 51547 / Ice1).